The chain runs to 345 residues: Dihydroorotate dehydrogenase (quinone) (345 aa).

Residues 65–69 (AGLDK) and Thr-89 each bind FMN. Position 69 (Lys-69) interacts with substrate. 114-118 (NRMGF) is a binding site for substrate. 2 residues coordinate FMN: Asn-142 and Asn-175. Asn-175 lines the substrate pocket. The active-site Nucleophile is the Ser-178. Asn-180 contributes to the substrate binding site. FMN-binding residues include Lys-220 and Thr-248. A substrate-binding site is contributed by 249 to 250 (NT). Residues Gly-271, Gly-300, and 321 to 322 (YT) contribute to the FMN site.

It belongs to the dihydroorotate dehydrogenase family. Type 2 subfamily. In terms of assembly, monomer. FMN is required as a cofactor.

It localises to the cell membrane. The enzyme catalyses (S)-dihydroorotate + a quinone = orotate + a quinol. It participates in pyrimidine metabolism; UMP biosynthesis via de novo pathway; orotate from (S)-dihydroorotate (quinone route): step 1/1. Functionally, catalyzes the conversion of dihydroorotate to orotate with quinone as electron acceptor. In Burkholderia mallei (strain NCTC 10247), this protein is Dihydroorotate dehydrogenase (quinone).